Here is a 230-residue protein sequence, read N- to C-terminus: Ribose-5-phosphate isomerase A (230 aa).

Substrate contacts are provided by residues 32–35 (TGST), 85–88 (DGAD), and 98–101 (KGGG). Glutamate 107 acts as the Proton acceptor in catalysis. Lysine 125 lines the substrate pocket.

The protein belongs to the ribose 5-phosphate isomerase family. In terms of assembly, homodimer.

The enzyme catalyses aldehydo-D-ribose 5-phosphate = D-ribulose 5-phosphate. The protein operates within carbohydrate degradation; pentose phosphate pathway; D-ribose 5-phosphate from D-ribulose 5-phosphate (non-oxidative stage): step 1/1. In terms of biological role, catalyzes the reversible conversion of ribose-5-phosphate to ribulose 5-phosphate. The protein is Ribose-5-phosphate isomerase A of Burkholderia ambifaria (strain ATCC BAA-244 / DSM 16087 / CCUG 44356 / LMG 19182 / AMMD) (Burkholderia cepacia (strain AMMD)).